Reading from the N-terminus, the 465-residue chain is Cysteine--tRNA ligase (465 aa).

Zn(2+) is bound at residue Cys-27. The 'HIGH' region motif lies at 29 to 39 (PTVYNFFHIGN). Cys-207, His-232, and Glu-236 together coordinate Zn(2+). The short motif at 264 to 268 (KMSKS) is the 'KMSKS' region element. Lys-267 contacts ATP.

The protein belongs to the class-I aminoacyl-tRNA synthetase family. Monomer. It depends on Zn(2+) as a cofactor.

It localises to the cytoplasm. It carries out the reaction tRNA(Cys) + L-cysteine + ATP = L-cysteinyl-tRNA(Cys) + AMP + diphosphate. This Clostridium kluyveri (strain NBRC 12016) protein is Cysteine--tRNA ligase.